The primary structure comprises 354 residues: Uroporphyrinogen decarboxylase (354 aa).

Residues 25–29 (RQAGR), D75, Y152, T207, and H330 each bind substrate.

It belongs to the uroporphyrinogen decarboxylase family. Homodimer.

The protein resides in the cytoplasm. The enzyme catalyses uroporphyrinogen III + 4 H(+) = coproporphyrinogen III + 4 CO2. Its pathway is porphyrin-containing compound metabolism; protoporphyrin-IX biosynthesis; coproporphyrinogen-III from 5-aminolevulinate: step 4/4. Its function is as follows. Catalyzes the decarboxylation of four acetate groups of uroporphyrinogen-III to yield coproporphyrinogen-III. This chain is Uroporphyrinogen decarboxylase, found in Xanthomonas euvesicatoria pv. vesicatoria (strain 85-10) (Xanthomonas campestris pv. vesicatoria).